Here is a 569-residue protein sequence, read N- to C-terminus: Carboxylesterase 3 (569 aa).

Residues 1-24 (MRLHRLRARLNAVAFGLLLLLVHG) form the signal peptide. Residues cysteine 95 and cysteine 122 are joined by a disulfide bond. A glycan (N-linked (GlcNAc...) asparagine) is linked at asparagine 103. Serine 227 functions as the Acyl-ester intermediate in the catalytic mechanism. A disulfide bridge connects residues cysteine 279 and cysteine 290. Residues glutamate 345 and histidine 458 each act as charge relay system in the active site. Residues 566–569 (QEDL) carry the Prevents secretion from ER motif.

It belongs to the type-B carboxylesterase/lipase family. In terms of processing, N-glycosylated.

It localises to the endoplasmic reticulum lumen. The enzyme catalyses a carboxylic ester + H2O = an alcohol + a carboxylate + H(+). Involved in the detoxification of xenobiotics and in the activation of ester and amide prodrugs. In Pongo abelii (Sumatran orangutan), this protein is Carboxylesterase 3 (CES3).